The chain runs to 462 residues: Argininosuccinate lyase (462 aa).

It belongs to the lyase 1 family. Argininosuccinate lyase subfamily.

The protein localises to the cytoplasm. It carries out the reaction 2-(N(omega)-L-arginino)succinate = fumarate + L-arginine. It participates in amino-acid biosynthesis; L-arginine biosynthesis; L-arginine from L-ornithine and carbamoyl phosphate: step 3/3. The protein is Argininosuccinate lyase of Bacillus thuringiensis (strain Al Hakam).